We begin with the raw amino-acid sequence, 647 residues long: Threonine--tRNA ligase (647 aa).

Positions 1–61 (MINITFPDGA…TEDGSIEIVT (61 aa)) constitute a TGS domain. A catalytic region spans residues 242–540 (DHRKLGKELD…LIENYKGAFP (299 aa)). Positions 336, 387, and 517 each coordinate Zn(2+).

The protein belongs to the class-II aminoacyl-tRNA synthetase family. In terms of assembly, homodimer. Zn(2+) is required as a cofactor.

The protein resides in the cytoplasm. It carries out the reaction tRNA(Thr) + L-threonine + ATP = L-threonyl-tRNA(Thr) + AMP + diphosphate + H(+). Functionally, catalyzes the attachment of threonine to tRNA(Thr) in a two-step reaction: L-threonine is first activated by ATP to form Thr-AMP and then transferred to the acceptor end of tRNA(Thr). Also edits incorrectly charged L-seryl-tRNA(Thr). The polypeptide is Threonine--tRNA ligase (Streptococcus pneumoniae (strain ATCC 700669 / Spain 23F-1)).